The sequence spans 380 residues: Cytochrome b (380 aa).

The next 4 membrane-spanning stretches (helical) occupy residues 34 to 54, 78 to 99, 114 to 134, and 179 to 199; these read FGSL…LLAM, WLIR…FLHI, WNTG…GYVL, and FFAL…IHLT. His84 and His98 together coordinate heme b. Positions 183 and 197 each coordinate heme b. His202 contributes to the a ubiquinone binding site. Helical transmembrane passes span 227–247, 289–309, 321–341, and 348–368; these read IKDI…TLFS, LGGV…PFLH, LSQT…WIGS, and FIII…ILFP.

Belongs to the cytochrome b family. The cytochrome bc1 complex contains 11 subunits: 3 respiratory subunits (MT-CYB, CYC1 and UQCRFS1), 2 core proteins (UQCRC1 and UQCRC2) and 6 low-molecular weight proteins (UQCRH/QCR6, UQCRB/QCR7, UQCRQ/QCR8, UQCR10/QCR9, UQCR11/QCR10 and a cleavage product of UQCRFS1). This cytochrome bc1 complex then forms a dimer. Heme b serves as cofactor.

Its subcellular location is the mitochondrion inner membrane. In terms of biological role, component of the ubiquinol-cytochrome c reductase complex (complex III or cytochrome b-c1 complex) that is part of the mitochondrial respiratory chain. The b-c1 complex mediates electron transfer from ubiquinol to cytochrome c. Contributes to the generation of a proton gradient across the mitochondrial membrane that is then used for ATP synthesis. This Alectoris graeca (Rock partridge) protein is Cytochrome b (MT-CYB).